A 431-amino-acid polypeptide reads, in one-letter code: Enolase (431 aa).

Residue Q167 coordinates (2R)-2-phosphoglycerate. The Proton donor role is filled by E209. The Mg(2+) site is built by D246, E290, and D317. (2R)-2-phosphoglycerate-binding residues include K342, R371, S372, and K393. K342 functions as the Proton acceptor in the catalytic mechanism.

It belongs to the enolase family. In terms of assembly, component of the RNA degradosome, a multiprotein complex involved in RNA processing and mRNA degradation. It depends on Mg(2+) as a cofactor.

It is found in the cytoplasm. Its subcellular location is the secreted. It localises to the cell surface. It catalyses the reaction (2R)-2-phosphoglycerate = phosphoenolpyruvate + H2O. It participates in carbohydrate degradation; glycolysis; pyruvate from D-glyceraldehyde 3-phosphate: step 4/5. Functionally, catalyzes the reversible conversion of 2-phosphoglycerate (2-PG) into phosphoenolpyruvate (PEP). It is essential for the degradation of carbohydrates via glycolysis. This Pectobacterium atrosepticum (strain SCRI 1043 / ATCC BAA-672) (Erwinia carotovora subsp. atroseptica) protein is Enolase.